A 46-amino-acid polypeptide reads, in one-letter code: Large ribosomal subunit protein bL33A (46 aa).

Belongs to the bacterial ribosomal protein bL33 family.

In Mesomycoplasma hyopneumoniae (strain 7448) (Mycoplasma hyopneumoniae), this protein is Large ribosomal subunit protein bL33A.